A 478-amino-acid polypeptide reads, in one-letter code: Metalloendopeptidase OMA1, mitochondrial (478 aa).

Residues 134 to 164 (LGRSIRKWWVALPANKKQLFREWSWRRRWHF) form a stress-sensor region region. The helical transmembrane segment at 163–183 (HFLGAGTGLLFIASLFFFTHL) threads the bilayer. H296 lines the Zn(2+) pocket. The active site involves E297. Positions 300 and 361 each coordinate Zn(2+). C376 and C434 are oxidised to a cystine.

The protein belongs to the peptidase M48 family. As to quaternary structure, homooligomer. Requires Zn(2+) as cofactor. Autocatalytically cleaved in response to mitochondrial depolarization both at the N-terminus and C-terminus to generate the short active form (S-OMA1). The S-OMA1 form is unstable. Post-translationally, may form a redox-dependent disulfide bond. Exists in a semi-oxidized state and is activated by prolonged hypoxia.

It is found in the mitochondrion inner membrane. Its activity is regulated as follows. Protease activity is activated upon autocatalytic cleavage in response to mitochondrial depolarization. Functionally, metalloprotease that is part of the quality control system in the inner membrane of mitochondria. Activated in response to various mitochondrial stress, leading to the proteolytic cleavage of target proteins, such as opa1 and dele1. Involved in the fusion of the mitochondrial inner membranes by mediating cleavage of opa1 at S1 position, generating the soluble opa1 (S-opa1), which cooperates with the membrane form (L-opa1) to coordinate the fusion of mitochondrial inner membranes. Following stress conditions that induce loss of mitochondrial membrane potential, mediates cleavage of opa1, leading to excess production of soluble opa1 (S-opa1) and negative regulation of mitochondrial fusion. Also acts as an activator of the integrated stress response (ISR): in response to mitochondrial stress, mediates cleavage of dele1 to generate the processed form of dele1 (S-DELE1), which translocates to the cytosol and activates eif2ak1/hri to trigger the ISR. Required for the stability of the respiratory supercomplexes. In Danio rerio (Zebrafish), this protein is Metalloendopeptidase OMA1, mitochondrial.